The following is a 156-amino-acid chain: Dynein 16 kDa light chain, flagellar outer arm (156 aa).

Positions 2-116 (AAGLPPVQYS…LNQQVLSLTP (115 aa)) constitute a Thioredoxin domain. The cysteines at positions 37 and 40 are disulfide-linked.

In terms of assembly, consists of at least 3 heavy chains (alpha, beta and gamma), 2 intermediate chains and 8 light chains.

Its subcellular location is the cell projection. It is found in the cilium. The protein localises to the flagellum. The protein resides in the cytoplasm. It localises to the cytoskeleton. Its subcellular location is the flagellum axoneme. In terms of biological role, may be involved in regulating the redox state of functionally important thiol groups within dynein. The protein is Dynein 16 kDa light chain, flagellar outer arm of Chlamydomonas reinhardtii (Chlamydomonas smithii).